The primary structure comprises 368 residues: Agmatine deiminase (368 aa).

Cys357 functions as the Amidino-cysteine intermediate in the catalytic mechanism.

It belongs to the agmatine deiminase family. Homodimer.

The catalysed reaction is agmatine + H2O = N-carbamoylputrescine + NH4(+). It functions in the pathway amine and polyamine biosynthesis; putrescine biosynthesis via agmatine pathway; N-carbamoylputrescine from agmatine: step 1/1. In terms of biological role, mediates the hydrolysis of agmatine into N-carbamoylputrescine in the arginine decarboxylase (ADC) pathway of putrescine biosynthesis, a basic polyamine. The chain is Agmatine deiminase from Ectopseudomonas mendocina (strain ymp) (Pseudomonas mendocina).